The following is an 86-amino-acid chain: Small ribosomal subunit protein bS16 (86 aa).

Belongs to the bacterial ribosomal protein bS16 family.

This chain is Small ribosomal subunit protein bS16, found in Bordetella bronchiseptica (strain ATCC BAA-588 / NCTC 13252 / RB50) (Alcaligenes bronchisepticus).